A 343-amino-acid chain; its full sequence is KRR1 small subunit processome component homolog (343 aa).

One can recognise a KH domain in the interval 125 to 193 (DIIKIGNLVH…VRDIVVETMN (69 aa)). The segment covering 232 to 245 (NISKRKQPKVKKAK) has biased composition (basic residues). The disordered stretch occupies residues 232–343 (NISKRKQPKV…KLLKANKKKV (112 aa)). Positions 270-302 (FLNKEQKQAKRQQERSAKQADAAKRQDERRNKD) form a coiled coil. Basic and acidic residues predominate over residues 271-302 (LNKEQKQAKRQQERSAKQADAAKRQDERRNKD). The segment covering 331-343 (LKAKLLKANKKKV) has biased composition (basic residues).

It belongs to the KRR1 family. As to quaternary structure, monomer. Component of the ribosomal small subunit (SSU) processome.

The protein resides in the nucleus. It is found in the nucleolus. Its function is as follows. Required for 40S ribosome biogenesis. Involved in nucleolar processing of pre-18S ribosomal RNA and ribosome assembly. Binds to RNA. Required for female germline development, cell viability during eye development and for survival of dividing cells and epithelial cells during early wing disk development. The polypeptide is KRR1 small subunit processome component homolog (Drosophila ananassae (Fruit fly)).